The sequence spans 95 residues: Cobalt transport protein CbiN (95 aa).

The next 2 membrane-spanning stretches (helical) occupy residues 5–25 (HILM…IYSG) and 67–87 (LLFA…FGYY).

It belongs to the CbiN family. As to quaternary structure, forms an energy-coupling factor (ECF) transporter complex composed of an ATP-binding protein (A component, CbiO), a transmembrane protein (T component, CbiQ) and 2 possible substrate-capture proteins (S components, CbiM and CbiN) of unknown stoichimetry.

It is found in the cell membrane. It participates in cofactor biosynthesis; adenosylcobalamin biosynthesis. Its function is as follows. Part of the energy-coupling factor (ECF) transporter complex CbiMNOQ involved in cobalt import. The protein is Cobalt transport protein CbiN of Methanothermobacter thermautotrophicus (strain ATCC 29096 / DSM 1053 / JCM 10044 / NBRC 100330 / Delta H) (Methanobacterium thermoautotrophicum).